The following is a 912-amino-acid chain: Translation initiation factor IF-2 (912 aa).

The interval 26–297 (SDQGEFVKSA…RGRKSKRAKR (272 aa)) is disordered. Residues 56 to 74 (KPAPAASNGAAAEAAAPPK) are compositionally biased toward low complexity. The span at 100–120 (APEPPAAPAAPAAPAPKPSPA) shows a compositional bias: pro residues. The span at 121-131 (ARPAAAEAAAP) shows a compositional bias: low complexity. Pro residues-rich tracts occupy residues 132-152 (APAP…PGAP), 173-183 (PRPQAPRPGAP), and 192-218 (NMPP…PGGG). Positions 219-283 (PRPGGAGRPG…GAAGAFGRPG (65 aa)) are enriched in gly residues. The span at 287-296 (KRGRKSKRAK) shows a compositional bias: basic residues. In terms of domain architecture, tr-type G spans 408-579 (TRPPVVTVMG…AVLLTADAAL (172 aa)). Residues 417–424 (GHVDHGKT) form a G1 region. 417–424 (GHVDHGKT) lines the GTP pocket. A G2 region spans residues 442-446 (GITQH). Residues 467-470 (DTPG) are G3. Residues 467-471 (DTPGH) and 521-524 (NKID) contribute to the GTP site. The tract at residues 521 to 524 (NKID) is G4. Residues 557-559 (SAR) form a G5 region.

Belongs to the TRAFAC class translation factor GTPase superfamily. Classic translation factor GTPase family. IF-2 subfamily.

It is found in the cytoplasm. One of the essential components for the initiation of protein synthesis. Protects formylmethionyl-tRNA from spontaneous hydrolysis and promotes its binding to the 30S ribosomal subunits. Also involved in the hydrolysis of GTP during the formation of the 70S ribosomal complex. In Mycobacteroides abscessus (strain ATCC 19977 / DSM 44196 / CCUG 20993 / CIP 104536 / JCM 13569 / NCTC 13031 / TMC 1543 / L948) (Mycobacterium abscessus), this protein is Translation initiation factor IF-2.